The sequence spans 299 residues: Very long chain fatty acid elongase 5 (299 aa).

Met1 carries the N-acetylmethionine modification. The next 7 helical transmembrane spans lie at 26-46, 64-84, 112-132, 139-158, 168-187, 205-225, and 227-247; these read WFLLDNYIPTFVCSAIYLLIV, ILVVYNLGLTLLSLYMFYELV, VLWWYYFSKLIEFMDTFFFIL, ITVLHVYHHATMLNIWWFVM, FGATLNSFIHVLMYSYYGLS, GQLVQFVLTIIQTSCGVIWPC, and FPLGWLYFQIGYMISLIALFT.

The protein belongs to the ELO family. ELOVL5 subfamily. In terms of assembly, interacts with TECR. Highly expressed in lung and brain.

The protein resides in the endoplasmic reticulum membrane. The protein localises to the cell projection. It localises to the dendrite. It carries out the reaction a very-long-chain acyl-CoA + malonyl-CoA + H(+) = a very-long-chain 3-oxoacyl-CoA + CO2 + CoA. It catalyses the reaction (6Z,9Z,12Z,15Z)-octadecatetraenoyl-CoA + malonyl-CoA + H(+) = (8Z,11Z,14Z,17Z)-3-oxoicosatetraenoyl-CoA + CO2 + CoA. The catalysed reaction is (6Z,9Z,12Z)-octadecatrienoyl-CoA + malonyl-CoA + H(+) = (8Z,11Z,14Z)-3-oxoeicosatrienoyl-CoA + CO2 + CoA. The enzyme catalyses (5Z,8Z,11Z,14Z,17Z)-eicosapentaenoyl-CoA + malonyl-CoA + H(+) = 3-oxo-(7Z,10Z,13Z,16Z,19Z)-docosapentaenoyl-CoA + CO2 + CoA. It carries out the reaction (5Z,8Z,11Z,14Z)-eicosatetraenoyl-CoA + malonyl-CoA + H(+) = (7Z,10Z,13Z,16Z)-3-oxodocosatetraenoyl-CoA + CO2 + CoA. It catalyses the reaction (9Z,12Z,15Z)-octadecatrienoyl-CoA + malonyl-CoA + H(+) = (11Z,14Z,17Z)-3-oxoeicosatrienoyl-CoA + CO2 + CoA. The catalysed reaction is (9Z)-hexadecenoyl-CoA + malonyl-CoA + H(+) = 3-oxo-(11Z)-octadecenoyl-CoA + CO2 + CoA. The enzyme catalyses (9Z)-octadecenoyl-CoA + malonyl-CoA + H(+) = 3-oxo-(11Z)-eicosenoyl-CoA + CO2 + CoA. It carries out the reaction (11Z)-octadecenoyl-CoA + malonyl-CoA + H(+) = 3-oxo-(13Z)-eicosenoyl-CoA + CO2 + CoA. It catalyses the reaction (9Z,12Z)-octadecadienoyl-CoA + malonyl-CoA + H(+) = (11Z,14Z)-3-oxoicosa-11,14-dienoyl-CoA + CO2 + CoA. Its pathway is lipid metabolism; polyunsaturated fatty acid biosynthesis. In terms of biological role, catalyzes the first and rate-limiting reaction of the four reactions that constitute the long-chain fatty acids elongation cycle. This endoplasmic reticulum-bound enzymatic process allows the addition of 2 carbons to the chain of long- and very long-chain fatty acids (VLCFAs) per cycle. Condensing enzyme that acts specifically toward polyunsaturated acyl-CoA with the higher activity toward C18:3(n-6) acyl-CoA. May participate in the production of monounsaturated and of polyunsaturated VLCFAs of different chain lengths that are involved in multiple biological processes as precursors of membrane lipids and lipid mediators. In conditions where the essential linoleic and alpha linoleic fatty acids are lacking it is also involved in the synthesis of Mead acid from oleic acid. This Rattus norvegicus (Rat) protein is Very long chain fatty acid elongase 5.